The chain runs to 404 residues: MQYSEIMIRYGELSTKKKNRMRFINKLKNNMEHVLSIYPDVSVKTDRDRGHVYLNGTDYHEVAESLKEIFGIQAFSPSFKVEKNVDTLVKAVQEIMTSVYKDGMTFKITAKRSDHSFELDSRALNHTLGDAVFSVLPNIKAQMKQPDINLKVEIRDEAAYISYENIRGAGGLPVGTSGKGMLMLSGGIDSPVAGYLALKRGVDIEAVHFASPPYTSPGALKKAHALTRKLTKFGGNIQFIEVPFTEIQEEIKEKAPEAYLMTLTRRFMMRITDRIRENRNGLVIINGESLGQVASQTLESMQAINAVTATPIIRPVVTMDKLEIIDIAQKIDTFDISIQPFEDCCTIFAPDRPKTNPKIKNTEQYEKRMDVEGLVERAVAGIMVTTIQPQADSDDVDDLIDDLL.

One can recognise a THUMP domain in the interval 60-165 (HEVAESLKEI…DEAAYISYEN (106 aa)). Residues 183–184 (ML), 208–209 (HF), arginine 265, glycine 287, and glutamine 296 contribute to the ATP site.

Belongs to the ThiI family.

It localises to the cytoplasm. It carries out the reaction [ThiI sulfur-carrier protein]-S-sulfanyl-L-cysteine + a uridine in tRNA + 2 reduced [2Fe-2S]-[ferredoxin] + ATP + H(+) = [ThiI sulfur-carrier protein]-L-cysteine + a 4-thiouridine in tRNA + 2 oxidized [2Fe-2S]-[ferredoxin] + AMP + diphosphate. The enzyme catalyses [ThiS sulfur-carrier protein]-C-terminal Gly-Gly-AMP + S-sulfanyl-L-cysteinyl-[cysteine desulfurase] + AH2 = [ThiS sulfur-carrier protein]-C-terminal-Gly-aminoethanethioate + L-cysteinyl-[cysteine desulfurase] + A + AMP + 2 H(+). The protein operates within cofactor biosynthesis; thiamine diphosphate biosynthesis. Its function is as follows. Catalyzes the ATP-dependent transfer of a sulfur to tRNA to produce 4-thiouridine in position 8 of tRNAs, which functions as a near-UV photosensor. Also catalyzes the transfer of sulfur to the sulfur carrier protein ThiS, forming ThiS-thiocarboxylate. This is a step in the synthesis of thiazole, in the thiamine biosynthesis pathway. The sulfur is donated as persulfide by IscS. The protein is Probable tRNA sulfurtransferase of Streptococcus agalactiae serotype Ia (strain ATCC 27591 / A909 / CDC SS700).